The chain runs to 780 residues: Ribosome biogenesis protein BOP1 homolog (780 aa).

Positions 1-11 are enriched in basic residues; that stretch reads MTKKQAIKRKV. The disordered stretch occupies residues 1–155; the sequence is MTKKQAIKRK…DSDTSDEEDI (155 aa). The segment covering 17 to 26 has biased composition (polar residues); sequence TNEQSSASEP. Acidic residues-rich tracts occupy residues 44–53, 60–72, 83–113, and 145–154; these read EDTTDDEGID, SSEDLEFESDEEG, AEGDAEEDEDDDEEEDEDSDEASEDNDDAEE, and EDSDTSDEED. 7 WD repeats span residues 441–482, 484–522, 566–608, 611–649, 652–691, 695–734, and 750–780; these read GHTD…RTIE, NDVVRCVAWCPNAKLSIIAVATGSRLLLINPKVGDKLLI, THFK…SQIP, KSKGLIQCVLFHPVKPCFFVATQHNIRIYDLVKQELIKK, TNSKWISGMSIHPKGDNLLVSTYDKKMLWFDLDLSTKPYQ, LHRNAVRSVAFHLRYPLFASGSDDQAVIVSHGMVYNDLLQ, and RDEFGVLDVSWHPVQPWVFSTGADCTIRLYT.

This sequence belongs to the WD repeat BOP1/ERB1 family.

Its subcellular location is the nucleus. It is found in the nucleolus. The protein resides in the nucleoplasm. Required for maturation of ribosomal RNAs and formation of the large ribosomal subunit. The protein is Ribosome biogenesis protein BOP1 homolog of Drosophila virilis (Fruit fly).